A 61-amino-acid chain; its full sequence is DNA-directed RNA polymerase subunit Rpo6 (61 aa).

This sequence belongs to the archaeal Rpo6/eukaryotic RPB6 RNA polymerase subunit family. In terms of assembly, part of the RNA polymerase complex.

It localises to the cytoplasm. The enzyme catalyses RNA(n) + a ribonucleoside 5'-triphosphate = RNA(n+1) + diphosphate. DNA-dependent RNA polymerase (RNAP) catalyzes the transcription of DNA into RNA using the four ribonucleoside triphosphates as substrates. The sequence is that of DNA-directed RNA polymerase subunit Rpo6 from Thermoplasma volcanium (strain ATCC 51530 / DSM 4299 / JCM 9571 / NBRC 15438 / GSS1).